We begin with the raw amino-acid sequence, 454 residues long: Putative tyrosine kinase 36 (454 aa).

ATP is bound by residues 80-88 and Lys-98; that span reads LGSGSFGKV. Asp-192 acts as the Proton acceptor in catalysis.

The protein belongs to the protein kinase superfamily. Tyr protein kinase family.

It catalyses the reaction L-tyrosyl-[protein] + ATP = O-phospho-L-tyrosyl-[protein] + ADP + H(+). In Alcelaphine herpesvirus 1 (strain C500) (AlHV-1), this protein is Putative tyrosine kinase 36 (36).